The sequence spans 841 residues: pre-rRNA 2'-O-ribose RNA methyltransferase FTSJ3 (841 aa).

S-adenosyl-L-methionine contacts are provided by G56, W58, D76, D92, and D117. K157 (proton acceptor) is an active-site residue. The segment at 332–366 (ISLSSGEEDEGNEEDSTAGTTEQPSKEEEEEEQLN) is disordered. S333, S335, S336, S347, and S356 each carry phosphoserine. Positions 337–347 (GEEDEGNEEDS) are enriched in acidic residues. Positions 356 to 404 (SKEEEEEEQLNQTLAEMKAQEVAELKRKKKKLLREQRKQRERVELKMDL) form a coiled coil. Residue K357 forms a Glycyl lysine isopeptide (Lys-Gly) (interchain with G-Cter in SUMO2) linkage. A Citrulline modification is found at R389. The segment at 454–482 (VSDVEDDGDDTSLDSDLDPEELAGVRGHQ) is disordered. A compositionally biased stretch (acidic residues) spans 456–474 (DVEDDGDDTSLDSDLDPEE). Phosphoserine is present on S547. Phosphothreonine is present on T567. K573 is covalently cross-linked (Glycyl lysine isopeptide (Lys-Gly) (interchain with G-Cter in SUMO2)). The residue at position 578 (S578) is a Phosphoserine. The disordered stretch occupies residues 579–654 (PLYQDEAPKG…IVPIEDPAKH (76 aa)). Residue K637 forms a Glycyl lysine isopeptide (Lys-Gly) (interchain with G-Cter in SUMO2) linkage. Phosphoserine is present on S638. K653 participates in a covalent cross-link: Glycyl lysine isopeptide (Lys-Gly) (interchain with G-Cter in SUMO2). Residue S670 is modified to Phosphoserine. A Glycyl lysine isopeptide (Lys-Gly) (interchain with G-Cter in SUMO2) cross-link involves residue K672. The residue at position 682 (S682) is a Phosphoserine. K704 participates in a covalent cross-link: Glycyl lysine isopeptide (Lys-Gly) (interchain with G-Cter in SUMO2). A coiled-coil region spans residues 733–771 (IKKVAEAKARKKRRMLKRLEQTRKKAEAVVNTVDISERE). The residue at position 777 (R777) is a Citrulline. A compositionally biased stretch (basic residues) spans 805–815 (VRRPAGVRGHF). The disordered stretch occupies residues 805 to 841 (VRRPAGVRGHFKVVDSRMKKDQRAQQRKEQKKKHKRK). The span at 816-832 (KVVDSRMKKDQRAQQRK) shows a compositional bias: basic and acidic residues.

Belongs to the class I-like SAM-binding methyltransferase superfamily. RNA methyltransferase RlmE family. SPB1 subfamily. As to quaternary structure, interacts with NIP7. In terms of processing, citrullinated by PADI4.

The protein resides in the nucleus. It is found in the nucleolus. It catalyses the reaction a ribonucleotide in rRNA + S-adenosyl-L-methionine = a 2'-O-methylribonucleotide in rRNA + S-adenosyl-L-homocysteine + H(+). Its function is as follows. RNA 2'-O-methyltransferase involved in the processing of the 34S pre-rRNA to 18S rRNA and in 40S ribosomal subunit formation. The chain is pre-rRNA 2'-O-ribose RNA methyltransferase FTSJ3 from Pongo abelii (Sumatran orangutan).